A 477-amino-acid polypeptide reads, in one-letter code: Probable cytosol aminopeptidase (477 aa).

Mn(2+)-binding residues include lysine 245 and aspartate 250. The active site involves lysine 257. Mn(2+) contacts are provided by aspartate 268, aspartate 327, and glutamate 329. Arginine 331 is an active-site residue.

Belongs to the peptidase M17 family. Mn(2+) is required as a cofactor.

The protein localises to the cytoplasm. It catalyses the reaction Release of an N-terminal amino acid, Xaa-|-Yaa-, in which Xaa is preferably Leu, but may be other amino acids including Pro although not Arg or Lys, and Yaa may be Pro. Amino acid amides and methyl esters are also readily hydrolyzed, but rates on arylamides are exceedingly low.. The catalysed reaction is Release of an N-terminal amino acid, preferentially leucine, but not glutamic or aspartic acids.. Presumably involved in the processing and regular turnover of intracellular proteins. Catalyzes the removal of unsubstituted N-terminal amino acids from various peptides. The sequence is that of Probable cytosol aminopeptidase from Exiguobacterium sibiricum (strain DSM 17290 / CCUG 55495 / CIP 109462 / JCM 13490 / 255-15).